The sequence spans 379 residues: Heme chaperone HemW (379 aa).

Residues 1 to 233 form the Radical SAM core domain; sequence MKSAYIHIPF…MSKMEAHGIH (233 aa). Tyrosine 5 contributes to the S-adenosyl-L-methionine binding site. [4Fe-4S] cluster is bound by residues cysteine 11, cysteine 15, and cysteine 18. S-adenosyl-L-methionine contacts are provided by residues glycine 60, 61-62, glutamate 94, glutamine 121, arginine 133, and aspartate 158; that span reads GT.

This sequence belongs to the anaerobic coproporphyrinogen-III oxidase family. HemW subfamily. Requires [4Fe-4S] cluster as cofactor.

The protein localises to the cytoplasm. In terms of biological role, probably acts as a heme chaperone, transferring heme to an unknown acceptor. Binds one molecule of heme per monomer, possibly covalently. Binds 1 [4Fe-4S] cluster. The cluster is coordinated with 3 cysteines and an exchangeable S-adenosyl-L-methionine. This Bacillus subtilis (strain 168) protein is Heme chaperone HemW.